A 330-amino-acid chain; its full sequence is Peroxidase 55 (330 aa).

The N-terminal stretch at 1-30 (MDIRSDDAKKPMMMWFLGMLLFSMVAESNA) is a signal peptide. Cystine bridges form between Cys41-Cys121, Cys74-Cys79, Cys127-Cys326, and Cys206-Cys238. Residue His72 is the Proton acceptor of the active site. Ca(2+) is bound by residues Asp73, Val76, Gly78, Asp80, and Ser82. Pro169 is a binding site for substrate. His199 contributes to the heme b binding site. Position 200 (Thr200) interacts with Ca(2+). Asn215 carries N-linked (GlcNAc...) asparagine glycosylation. Ca(2+) is bound by residues Asp250, Ser253, and Asp258.

Belongs to the peroxidase family. Classical plant (class III) peroxidase subfamily. Requires heme b as cofactor. The cofactor is Ca(2+). Slightly expressed in roots.

It is found in the secreted. It carries out the reaction 2 a phenolic donor + H2O2 = 2 a phenolic radical donor + 2 H2O. Functionally, removal of H(2)O(2), oxidation of toxic reductants, biosynthesis and degradation of lignin, suberization, auxin catabolism, response to environmental stresses such as wounding, pathogen attack and oxidative stress. These functions might be dependent on each isozyme/isoform in each plant tissue. This chain is Peroxidase 55 (PER55), found in Arabidopsis thaliana (Mouse-ear cress).